Reading from the N-terminus, the 113-residue chain is Sporulation membrane protein YtrH (113 aa).

3 consecutive transmembrane segments (helical) span residues 16–36, 51–71, and 86–106; these read FIAL…AYLA, LKIW…YSFE, and LLLI…ISWL.

It is found in the forespore outer membrane. Functionally, involved in sporulation. May contribute to cortex formation or stability. The sequence is that of Sporulation membrane protein YtrH (ytrH) from Bacillus subtilis (strain 168).